The chain runs to 60 residues: Metallothionein B (60 aa).

A beta region spans residues 1 to 28 (MDPCECSKSGTCNCGGSCTCTNCSCTSC). A divalent metal cation is bound by residues cysteine 4, cysteine 6, cysteine 12, cysteine 14, cysteine 18, cysteine 20, cysteine 23, cysteine 25, cysteine 28, cysteine 32, cysteine 33, cysteine 35, cysteine 36, cysteine 40, cysteine 43, cysteine 47, cysteine 49, cysteine 54, cysteine 58, and cysteine 59. The segment at 29-60 (KKSCCPCCPSGCTKCASGCVCKGKTCDTSCCQ) is alpha.

This sequence belongs to the metallothionein superfamily. Type 1 family.

In terms of biological role, metallothioneins have a high content of cysteine residues that bind various heavy metals. In Trematomus bernacchii (Emerald rockcod), this protein is Metallothionein B (mtb).